An 823-amino-acid chain; its full sequence is DNA ligase (823 aa).

Residues 32 to 36 (DAEYD), 81 to 82 (SL), and glutamate 121 contribute to the NAD(+) site. The N6-AMP-lysine intermediate role is filled by lysine 123. Residues arginine 144, glutamate 181, lysine 299, and lysine 323 each contribute to the NAD(+) site. Residues cysteine 449, cysteine 452, cysteine 467, and cysteine 473 each coordinate Zn(2+). The interval 528 to 558 (ETADKGSSENENGDAETVSGDLSKYNTQNGK) is disordered. In terms of domain architecture, BRCT spans 746 to 823 (GINKAVAGKT…SEAELLTLLC (78 aa)).

This sequence belongs to the NAD-dependent DNA ligase family. LigA subfamily. It depends on Mg(2+) as a cofactor. Requires Mn(2+) as cofactor.

The catalysed reaction is NAD(+) + (deoxyribonucleotide)n-3'-hydroxyl + 5'-phospho-(deoxyribonucleotide)m = (deoxyribonucleotide)n+m + AMP + beta-nicotinamide D-nucleotide.. DNA ligase that catalyzes the formation of phosphodiester linkages between 5'-phosphoryl and 3'-hydroxyl groups in double-stranded DNA using NAD as a coenzyme and as the energy source for the reaction. It is essential for DNA replication and repair of damaged DNA. This is DNA ligase from Neisseria gonorrhoeae (strain NCCP11945).